We begin with the raw amino-acid sequence, 192 residues long: Peptidyl-tRNA hydrolase (192 aa).

Position 17 (tyrosine 17) interacts with tRNA. The active-site Proton acceptor is histidine 22. The tRNA site is built by phenylalanine 68, asparagine 70, and asparagine 116.

The protein belongs to the PTH family. As to quaternary structure, monomer.

The protein localises to the cytoplasm. The enzyme catalyses an N-acyl-L-alpha-aminoacyl-tRNA + H2O = an N-acyl-L-amino acid + a tRNA + H(+). Functionally, hydrolyzes ribosome-free peptidyl-tRNAs (with 1 or more amino acids incorporated), which drop off the ribosome during protein synthesis, or as a result of ribosome stalling. Catalyzes the release of premature peptidyl moieties from peptidyl-tRNA molecules trapped in stalled 50S ribosomal subunits, and thus maintains levels of free tRNAs and 50S ribosomes. This is Peptidyl-tRNA hydrolase from Buchnera aphidicola subsp. Cinara cedri (strain Cc).